The chain runs to 284 residues: Tropomyosin (284 aa).

The stretch at 1–280 (MDAIKKKMQA…SDELDQTFAE (280 aa)) forms a coiled coil.

This sequence belongs to the tropomyosin family. Homodimer.

Its function is as follows. Tropomyosin, in association with the troponin complex, plays a central role in the calcium dependent regulation of muscle contraction. The protein is Tropomyosin of Sinonovacula constricta (Razor clam).